The chain runs to 217 residues: Vesicle-associated membrane protein 723 (217 aa).

Over 1–192 (MAQQSLFYSF…KWFQNMKIKL (192 aa)) the chain is Cytoplasmic. A Longin domain is found at 10–114 (FIARGTVILV…SLNKEFGSNL (105 aa)). One can recognise a v-SNARE coiled-coil homology domain in the interval 130–186 (NLAKAKAQVSEVKSLMMENIEKVLARGVICEMLGSSESQPQAFYIKRTQMKRKKWFQ). A helical; Anchor for type IV membrane protein membrane pass occupies residues 193–213 (IVLAIIIALILIIILSVCGGF). Residues 214–217 (NCGK) are Vesicular-facing.

Belongs to the synaptobrevin family. Highly expressed in stems and roots. Detected in flowers and leaves.

Its subcellular location is the endoplasmic reticulum membrane. In terms of biological role, involved in the targeting and/or fusion of transport vesicles to their target membrane. This is Vesicle-associated membrane protein 723 from Arabidopsis thaliana (Mouse-ear cress).